We begin with the raw amino-acid sequence, 338 residues long: tRNA N6-adenosine threonylcarbamoyltransferase (338 aa).

Fe cation contacts are provided by His111 and His115. Substrate-binding positions include 134 to 138, Asp167, Gly180, and Asn272; that span reads LVSGG. Asp300 is a binding site for Fe cation.

The protein belongs to the KAE1 / TsaD family. Fe(2+) serves as cofactor.

It is found in the cytoplasm. The catalysed reaction is L-threonylcarbamoyladenylate + adenosine(37) in tRNA = N(6)-L-threonylcarbamoyladenosine(37) in tRNA + AMP + H(+). Required for the formation of a threonylcarbamoyl group on adenosine at position 37 (t(6)A37) in tRNAs that read codons beginning with adenine. Is involved in the transfer of the threonylcarbamoyl moiety of threonylcarbamoyl-AMP (TC-AMP) to the N6 group of A37, together with TsaE and TsaB. TsaD likely plays a direct catalytic role in this reaction. The sequence is that of tRNA N6-adenosine threonylcarbamoyltransferase from Shewanella halifaxensis (strain HAW-EB4).